Reading from the N-terminus, the 259-residue chain is Short-chain dehydrogenase chry4 (259 aa).

Positions 37, 55, 81, 154, 158, 185, and 187 each coordinate NADP(+). The Proton donor role is filled by Tyr-154. Residue Lys-158 is the Lowers pKa of active site Tyr of the active site.

This sequence belongs to the short-chain dehydrogenases/reductases (SDR) family.

It participates in pigment biosynthesis. Short-chain dehydrogenase; part of the gene cluster that mediates the biosynthesis of the yellow pigment chrysogine. Pyruvic acid and anthranilic acid are likely substrates for the nonribosomal peptide synthetase chry1/NRPS14, with pyruvic acid adenylated by the first A domain and anthranilic acid by the second. If pyruvic acid and anthranilic acid are merged and released from chry1/NRPS14 by hydrolysis, a subsequent amidation would lead to 2-pyruvoylaminobenzamide. This process is probably catalyzed by the amidotransferase chry2 using glutamine as amino donor. The dehydrogenase chry5 that has a terminal berberine bridge domain for C-N cyclization could catalyze the cyclization of 2-pyruvoylaminobenzamide to yield acetyl-4(3H)-quinazolidinone. A final reduction of acetyl-4(3H)-quinazolidinone catalyzed by the oxidoreductase chry4 would result in chrysogine. This chain is Short-chain dehydrogenase chry4, found in Gibberella zeae (strain ATCC MYA-4620 / CBS 123657 / FGSC 9075 / NRRL 31084 / PH-1) (Wheat head blight fungus).